The following is a 253-amino-acid chain: Major prion protein (253 aa).

An N-terminal signal peptide occupies residues 1–22 (MANLGCWMLVLFVATWSDLGLC). Positions 23–38 (KKRPKPGGWNTGGSRY) are interaction with ADGRG6. An interaction with GRB2, ERI3 and SYN1 region spans residues 23–230 (KKRPKPGGWN…ESQAYYQRGS (208 aa)). The segment at 26–108 (PKPGGWNTGG…WNKPSKPKTN (83 aa)) is disordered. Tandem repeats lie at residues 51 to 59 (PQGGGGWGQ), 60 to 67 (PHGGGWGQ), 68 to 75 (PHGGGWGQ), 76 to 83 (PHGGGWGQ), and 84 to 91 (PHGGGWGQ). The segment at 51–91 (PQGGGGWGQPHGGGWGQPHGGGWGQPHGGGWGQPHGGGWGQ) is 5 X 8 AA tandem repeats of P-H-G-G-G-W-G-Q. Over residues 52 to 95 (QGGGGWGQPHGGGWGQPHGGGWGQPHGGGWGQPHGGGWGQGGGT) the composition is skewed to gly residues. Positions 61, 62, 63, 69, 70, 71, 77, 78, 79, 85, 86, and 87 each coordinate Cu(2+). Cysteines 179 and 214 form a disulfide. N-linked (GlcNAc...) asparagine glycosylation is found at Asn-181 and Asn-197. Ser-230 carries the GPI-anchor amidated serine lipid modification. A propeptide spans 231-253 (SMVLFSSPPVILLISFLIFLIVG) (removed in mature form).

Belongs to the prion family. Monomer and homodimer. Has a tendency to aggregate into amyloid fibrils containing a cross-beta spine, formed by a steric zipper of superposed beta-strands. Soluble oligomers may represent an intermediate stage on the path to fibril formation. Copper binding may promote oligomerization. Interacts with GRB2, APP, ERI3/PRNPIP and SYN1. Mislocalized cytosolically exposed PrP interacts with MGRN1; this interaction alters MGRN1 subcellular location and causes lysosomal enlargement. Interacts with APP. Interacts with KIAA1191. Interacts with ADGRG6.

The protein localises to the cell membrane. Its subcellular location is the golgi apparatus. In terms of biological role, its primary physiological function is unclear. May play a role in neuronal development and synaptic plasticity. May be required for neuronal myelin sheath maintenance. May promote myelin homeostasis through acting as an agonist for ADGRG6 receptor. May play a role in iron uptake and iron homeostasis. Soluble oligomers are toxic to cultured neuroblastoma cells and induce apoptosis (in vitro). Association with GPC1 (via its heparan sulfate chains) targets PRNP to lipid rafts. Also provides Cu(2+) or Zn(2+) for the ascorbate-mediated GPC1 deaminase degradation of its heparan sulfate side chains. The sequence is that of Major prion protein (PRNP) from Gorilla gorilla gorilla (Western lowland gorilla).